We begin with the raw amino-acid sequence, 586 residues long: Major facilitator superfamily domain-containing protein 6-like (586 aa).

A run of 2 helical transmembrane segments spans residues 50-70 (ILMG…AFLA) and 78-98 (MFLT…VLVP). The segment at 218-237 (GPVNLSKPQGDTQTPDHSSK) is disordered. Polar residues predominate over residues 223 to 237 (SKPQGDTQTPDHSSK). Helical transmembrane passes span 240–260 (PWTF…AAPL), 284–304 (LWVW…ALVG), 318–338 (VIYF…STAF), 365–385 (LILL…VQDF), 397–417 (ELVM…FHPF), 428–448 (VGVL…YAFI), 454–474 (VLPV…AVGA), 494–514 (GHFY…VVLH), and 519–538 (VLYE…FLSI).

It belongs to the major facilitator superfamily. MFSD6 family.

Its subcellular location is the membrane. This chain is Major facilitator superfamily domain-containing protein 6-like (Mfsd6l), found in Mus musculus (Mouse).